A 118-amino-acid chain; its full sequence is Putative pterin-4-alpha-carbinolamine dehydratase (118 aa).

It belongs to the pterin-4-alpha-carbinolamine dehydratase family.

It carries out the reaction (4aS,6R)-4a-hydroxy-L-erythro-5,6,7,8-tetrahydrobiopterin = (6R)-L-erythro-6,7-dihydrobiopterin + H2O. The protein is Putative pterin-4-alpha-carbinolamine dehydratase of Xanthomonas campestris pv. campestris (strain B100).